The primary structure comprises 217 residues: Nucleoredoxin-like protein 1 (217 aa).

The Thioredoxin domain occupies 1-164 (MASLFSGRIL…AAELLDRSFL (164 aa)). Positions 188-204 (VDRDVGRERGRNGRDSG) are enriched in basic and acidic residues. The disordered stretch occupies residues 188-217 (VDRDVGRERGRNGRDSGDPQGDAGTRAELW).

This sequence belongs to the nucleoredoxin family. In terms of assembly, interacts with isoform 1 of BSG. As to expression, expressed in the retina (at protein level). Expressed predominantly by photoreceptors in both the inner and outer nuclear layer (at protein level). Not expressed in the testis, spleen, intestine, lung, cerebellum, or kidney.

The protein localises to the cell projection. Its subcellular location is the cilium. The protein resides in the photoreceptor outer segment. In terms of biological role, plays an important role in retinal cone photoreceptor survival. In association with glucose transporter SLC16A1/GLUT1 and BSG, promotes retinal cone survival by enhancing aerobic glycolysis and accelerating the entry of glucose into photoreceptors. May play a role in cone cell viability, slowing down cone degeneration, does not seem to play a role in degenerating rods. In Mus musculus (Mouse), this protein is Nucleoredoxin-like protein 1 (Nxnl1).